The following is a 440-amino-acid chain: MDPPCSLSARFEGSFAYLTIRDRLPQILTKVIDTVHRNKNKFFEDNGEEGVEAEKKALSFFSKLRNEIQTDKPVLPLTDNQSDTELWNQYLDYQKTLLNKGETPSWFKSPWLYVECYMYRRIQEGLVLSPPISEYDVFREGKTESFFQSQPAIIALCTYLQELKNNVANLSENQKKEELSKLLQVCLWGNKCDLSISGGLDNSQKFSILSSLESFMPFILVNDMESVWAVLSGSKNLESGKELMKRVDIVLDNAGFELITDFVLADALLSLRLASEVHFHAKCMPWFVSDTTKHDFNWTIKHLQAANHKWMSKCGVNWKENLQRSCWIYHEHLFWTLPHEFCMMAQTAPDLYSELQKSDLVIFKGDLNYRKLTGDRKWEFTVPFFQALTTFHPAPLCSIRTLKADVQVGLKPGVGEQLSSNEPDWMISGKYGVVQLSTSV.

Residues Asp252 and Asn253 each contribute to the Mn(2+) site. 252 to 253 (DN) contributes to the substrate binding site. Positions 257 and 290 each coordinate S-adenosyl-L-methionine. Asp290 lines the Mn(2+) pocket. Substrate is bound by residues 366–370 (DLNYR) and Lys403. Positions 400-403 (RTLK) match the Subfamily III RTxK motif motif.

It belongs to the damage-control phosphatase family. Sugar phosphate phosphatase III subfamily. The cofactor is Mn(2+). Requires Ni(2+) as cofactor. Post-translationally, automethylated.

It catalyses the reaction beta-D-fructose 1-phosphate + H2O = D-fructose + phosphate. The enzyme catalyses beta-D-fructose 6-phosphate = dihydroxyacetone + D-glyceraldehyde 3-phosphate. The catalysed reaction is L-glutamyl-[protein] + S-adenosyl-L-methionine = [protein]-L-glutamate 5-O-methyl ester + S-adenosyl-L-homocysteine. Metal-dependent phosphatase that shows phosphatase activity against several substrates, including fructose-1-phosphate and fructose-6-phosphate. Its preference for fructose-1-phosphate, a strong glycating agent that causes DNA damage rather than a canonical yeast metabolite, suggests a damage-control function in hexose phosphate metabolism. Has also been shown to have O-methyltransferase activity that methylates glutamate residues of target proteins to form gamma-glutamyl methyl ester residues. Possibly methylates PCNA, suggesting it is involved in the DNA damage response. This Xenopus tropicalis (Western clawed frog) protein is Damage-control phosphatase ARMT1.